We begin with the raw amino-acid sequence, 285 residues long: Zinc transporter ZupT (285 aa).

Transmembrane regions (helical) follow at residues 13-33 (AFLL…IAFF), 41-61 (FLCV…MIEM), and 80-100 (WITV…DKFV). Fe(2+) contacts are provided by Asn153 and Glu156. Position 156 (Glu156) interacts with Zn(2+). A helical membrane pass occupies residues 160-180 (TFVSALEGASLAIPITIAIAI). His181 lines the Zn(2+) pocket. 3 residues coordinate Fe(2+): Asn182, Glu185, and Glu214. Position 185 (Glu185) interacts with Zn(2+). The next 3 membrane-spanning stretches (helical) occupy residues 204–224 (FLYS…GYTL), 228–248 (IFND…MVFI), and 265–285 (LAIY…LLFI).

It belongs to the ZIP transporter (TC 2.A.5) family. ZupT subfamily.

It is found in the cell membrane. It carries out the reaction Zn(2+)(in) = Zn(2+)(out). Functionally, mediates zinc uptake. May also transport other divalent cations. The protein is Zinc transporter ZupT of Clostridium perfringens (strain 13 / Type A).